A 38-amino-acid polypeptide reads, in one-letter code: Large ribosomal subunit protein bL36 (38 aa).

It belongs to the bacterial ribosomal protein bL36 family.

The protein is Large ribosomal subunit protein bL36 of Prosthecochloris aestuarii (strain DSM 271 / SK 413).